The chain runs to 55 residues: Ovomucoid (55 aa).

A Kazal-like domain is found at 5–55 (VDCSEHPKPACTLDYRPICGSDSKTYSNKCDFCNAVMDSNGTLTLSHFGKC). Intrachain disulfides connect cysteine 7-cysteine 37, cysteine 15-cysteine 34, and cysteine 23-cysteine 55. N-linked (GlcNAc...) asparagine glycosylation is present at asparagine 44.

Its subcellular location is the secreted. This chain is Ovomucoid, found in Dacelo novaeguineae (Laughing kookaburra).